Here is a 333-residue protein sequence, read N- to C-terminus: Ornithine carbamoyltransferase (333 aa).

Carbamoyl phosphate-binding positions include 56–59 (STRT), Arg-107, and 134–137 (HPTQ). Residues Asn-167, Asp-231, and 235–236 (SM) contribute to the L-ornithine site. Carbamoyl phosphate-binding positions include 273–274 (CL) and Arg-318.

It belongs to the aspartate/ornithine carbamoyltransferase superfamily. OTCase family.

It localises to the cytoplasm. The enzyme catalyses carbamoyl phosphate + L-ornithine = L-citrulline + phosphate + H(+). The protein operates within amino-acid degradation; L-arginine degradation via ADI pathway; carbamoyl phosphate from L-arginine: step 2/2. Reversibly catalyzes the transfer of the carbamoyl group from carbamoyl phosphate (CP) to the N(epsilon) atom of ornithine (ORN) to produce L-citrulline. The protein is Ornithine carbamoyltransferase of Clostridium botulinum (strain ATCC 19397 / Type A).